Reading from the N-terminus, the 45-residue chain is Large ribosomal subunit protein bL34 (45 aa).

This sequence belongs to the bacterial ribosomal protein bL34 family.

The sequence is that of Large ribosomal subunit protein bL34 from Leifsonia xyli subsp. xyli (strain CTCB07).